Here is a 462-residue protein sequence, read N- to C-terminus: MNEGQVVQVIGPVVDVEFASDRLPDLYNAITIKTDKINITMEAMQHLGNNTVRCVALSSTDGLQRGMKAVDTGQPITVPVGRATLGRLFNVLGEPIDNQGPVETTERLPIHRPAPSFEEQQPSTEVLETGIKVVDLLAPYAKGGKIGLFGGAGVGKTVLIMELIRNIAYEHGGFSVFSGVGERTREGNDLYLEMKESGVLEKTALVFGQMNEPPGARLRVGLTGLTMAEYFRDAEGQDVLLFIDNIFRFVQAGSEVSALLGRMPSAVGYQPTLATEMGALQERITSTKKGSITSVQAIYVPADDLTDPAPATTFAHLDATTVLSRQIAELGIYPAVDPLDSTSRILDPRVLGEEHYQVARGVQQVLQRYKELQDIIAILGMDELSEEDKLIVARARKIQRFLSQPFHVAEAFTGQPGVYVPLKETIRGFKEILEGRHDNLPEQAFYMVGTIDEAVKKGQELM.

150–157 (GGAGVGKT) contributes to the ATP binding site.

It belongs to the ATPase alpha/beta chains family. F-type ATPases have 2 components, CF(1) - the catalytic core - and CF(0) - the membrane proton channel. CF(1) has five subunits: alpha(3), beta(3), gamma(1), delta(1), epsilon(1). CF(0) has three main subunits: a(1), b(2) and c(9-12). The alpha and beta chains form an alternating ring which encloses part of the gamma chain. CF(1) is attached to CF(0) by a central stalk formed by the gamma and epsilon chains, while a peripheral stalk is formed by the delta and b chains. In this bacterium the a and b subunits are transcribed but do not seem to be translated, thus the ATP synthase consists of the alpha, beta, gamma, delta, epsilon and c subunits.

Its subcellular location is the cell membrane. It carries out the reaction ATP + H2O + 4 H(+)(in) = ADP + phosphate + 5 H(+)(out). Its function is as follows. Produces ATP from ADP in the presence of a proton gradient across the membrane. The catalytic sites are hosted primarily by the beta subunits. In Moorella thermoacetica (strain ATCC 39073 / JCM 9320), this protein is ATP synthase subunit beta.